The chain runs to 205 residues: MSKRESSKYKIDRRMGENIWGRPKSPVNRREYGPGQHGQRRKSKLSDFGVQLRAKQKLKGYYGDIREKQFRAIFAEASRRKGDTPENLVGLLESRLDAIVYRAKFVPTVFAARQFVNHGHVKVNGVRVNIGSYRCKPGDVIEVKESSKQLVTVLEAVQLAERDVPDYIEADHNKMVATFVRVPALADVPYPVIMEPHLVVEFYSR.

Over residues 1–16 the composition is skewed to basic and acidic residues; the sequence is MSKRESSKYKIDRRMG. Residues 1 to 46 form a disordered region; the sequence is MSKRESSKYKIDRRMGENIWGRPKSPVNRREYGPGQHGQRRKSKLS. An S4 RNA-binding domain is found at 94–157; sequence SRLDAIVYRA…KQLVTVLEAV (64 aa).

Belongs to the universal ribosomal protein uS4 family. As to quaternary structure, part of the 30S ribosomal subunit. Contacts protein S5. The interaction surface between S4 and S5 is involved in control of translational fidelity.

In terms of biological role, one of the primary rRNA binding proteins, it binds directly to 16S rRNA where it nucleates assembly of the body of the 30S subunit. With S5 and S12 plays an important role in translational accuracy. This Sinorhizobium medicae (strain WSM419) (Ensifer medicae) protein is Small ribosomal subunit protein uS4.